A 109-amino-acid polypeptide reads, in one-letter code: Putative double-stranded DNA mimic protein YciU (109 aa).

This sequence belongs to the putative dsDNA mimic protein family.

May act as a double-stranded DNA (dsDNA) mimic. Probably regulates the activity of a dsDNA-binding protein. The polypeptide is Putative double-stranded DNA mimic protein YciU (Shigella boydii serotype 18 (strain CDC 3083-94 / BS512)).